The chain runs to 144 residues: Large ribosomal subunit protein uL15 (144 aa).

The segment at 1 to 49 (MRLNTLSPAAGSKSAPKRVGRGIGSGLGKTAGRGHKGQKSRSGGGVRVG) is disordered. The segment covering 21–31 (RGIGSGLGKTA) has biased composition (gly residues).

Belongs to the universal ribosomal protein uL15 family. In terms of assembly, part of the 50S ribosomal subunit.

In terms of biological role, binds to the 23S rRNA. The chain is Large ribosomal subunit protein uL15 from Shewanella denitrificans (strain OS217 / ATCC BAA-1090 / DSM 15013).